Reading from the N-terminus, the 230-residue chain is Cytochrome c oxidase subunit 2 (230 aa).

The Mitochondrial intermembrane segment spans residues 1 to 14 (MAHPSQLGFQDAAS). The helical transmembrane segment at 15–45 (PVMEELLHFHDHALMIVFLISTLVLYIIAAT) threads the bilayer. At 46-59 (ASTKLTDKYILDSQ) the chain is on the mitochondrial matrix side. The chain crosses the membrane as a helical span at residues 60–87 (EIEVIWTIMPAVILILIALPSLRILYLM). Residues 88–230 (DEINDPHLTV…NWSSLMLEDA (143 aa)) lie on the Mitochondrial intermembrane side of the membrane. 6 residues coordinate Cu cation: H161, C196, E198, C200, H204, and M207. Residue E198 coordinates Mg(2+).

Belongs to the cytochrome c oxidase subunit 2 family. In terms of assembly, component of the cytochrome c oxidase (complex IV, CIV), a multisubunit enzyme composed of 14 subunits. The complex is composed of a catalytic core of 3 subunits MT-CO1, MT-CO2 and MT-CO3, encoded in the mitochondrial DNA, and 11 supernumerary subunits COX4I, COX5A, COX5B, COX6A, COX6B, COX6C, COX7A, COX7B, COX7C, COX8 and NDUFA4, which are encoded in the nuclear genome. The complex exists as a monomer or a dimer and forms supercomplexes (SCs) in the inner mitochondrial membrane with NADH-ubiquinone oxidoreductase (complex I, CI) and ubiquinol-cytochrome c oxidoreductase (cytochrome b-c1 complex, complex III, CIII), resulting in different assemblies (supercomplex SCI(1)III(2)IV(1) and megacomplex MCI(2)III(2)IV(2)). Found in a complex with TMEM177, COA6, COX18, COX20, SCO1 and SCO2. Interacts with TMEM177 in a COX20-dependent manner. Interacts with COX20. Interacts with COX16. Cu cation is required as a cofactor.

Its subcellular location is the mitochondrion inner membrane. It catalyses the reaction 4 Fe(II)-[cytochrome c] + O2 + 8 H(+)(in) = 4 Fe(III)-[cytochrome c] + 2 H2O + 4 H(+)(out). Component of the cytochrome c oxidase, the last enzyme in the mitochondrial electron transport chain which drives oxidative phosphorylation. The respiratory chain contains 3 multisubunit complexes succinate dehydrogenase (complex II, CII), ubiquinol-cytochrome c oxidoreductase (cytochrome b-c1 complex, complex III, CIII) and cytochrome c oxidase (complex IV, CIV), that cooperate to transfer electrons derived from NADH and succinate to molecular oxygen, creating an electrochemical gradient over the inner membrane that drives transmembrane transport and the ATP synthase. Cytochrome c oxidase is the component of the respiratory chain that catalyzes the reduction of oxygen to water. Electrons originating from reduced cytochrome c in the intermembrane space (IMS) are transferred via the dinuclear copper A center (CU(A)) of subunit 2 and heme A of subunit 1 to the active site in subunit 1, a binuclear center (BNC) formed by heme A3 and copper B (CU(B)). The BNC reduces molecular oxygen to 2 water molecules using 4 electrons from cytochrome c in the IMS and 4 protons from the mitochondrial matrix. This chain is Cytochrome c oxidase subunit 2 (mt-co2), found in Tetraodon nigroviridis (Spotted green pufferfish).